The sequence spans 177 residues: Large ribosomal subunit protein uL6 (177 aa).

This sequence belongs to the universal ribosomal protein uL6 family. Part of the 50S ribosomal subunit.

Functionally, this protein binds to the 23S rRNA, and is important in its secondary structure. It is located near the subunit interface in the base of the L7/L12 stalk, and near the tRNA binding site of the peptidyltransferase center. This chain is Large ribosomal subunit protein uL6, found in Pectobacterium atrosepticum (strain SCRI 1043 / ATCC BAA-672) (Erwinia carotovora subsp. atroseptica).